Consider the following 349-residue polypeptide: Adenine deaminase (349 aa).

Positions 24, 26, and 204 each coordinate Zn(2+). Catalysis depends on Glu207, which acts as the Proton donor. A Zn(2+)-binding site is contributed by Asp285. Asp286 provides a ligand contact to substrate.

The protein belongs to the metallo-dependent hydrolases superfamily. Adenosine and AMP deaminases family. Adenine deaminase type 2 subfamily. The cofactor is Zn(2+).

It carries out the reaction adenine + H2O + H(+) = hypoxanthine + NH4(+). Its function is as follows. Catalyzes the hydrolytic deamination of adenine to hypoxanthine. Plays an important role in the purine salvage pathway and in nitrogen catabolism. The polypeptide is Adenine deaminase (Trichlorobacter lovleyi (strain ATCC BAA-1151 / DSM 17278 / SZ) (Geobacter lovleyi)).